A 163-amino-acid polypeptide reads, in one-letter code: MKTYRRQIREKILQALYTLELRETDIESAAGWLLTPEILEDPNAMKFFNLLLKSIKDNREEIDRYIAAHTFNWDMSRIAIIDKNILRMALAELLYCEDIPPKVSINEAIEIAKKFNSTDKSSKFVNGILDAIFNELKTEGKIKKNGRGLINHSPAKVQKTEPE.

The protein belongs to the NusB family.

Involved in transcription antitermination. Required for transcription of ribosomal RNA (rRNA) genes. Binds specifically to the boxA antiterminator sequence of the ribosomal RNA (rrn) operons. The chain is Transcription antitermination protein NusB from Chlorobium luteolum (strain DSM 273 / BCRC 81028 / 2530) (Pelodictyon luteolum).